The chain runs to 223 residues: Adenylate kinase (223 aa).

ATP is bound at residue 10–15; that stretch reads GAGKGT. Residues 30–59 are NMP; that stretch reads STGDILRQAVKEGTEVGKIAGELMKAGKLI. AMP is bound by residues Thr-31, Arg-36, 57–59, 85–88, and Gln-92; these read KLI and GFPR. The segment at 126–163 is LID; sequence GRYVCAQCGAGYHDEFKRPHKEGVCDICGSTEFKRRPD. An ATP-binding site is contributed by Arg-127. Zn(2+) is bound by residues Cys-130, Cys-133, Cys-150, and Cys-153. AMP-binding residues include Arg-160 and Arg-172. Leu-200 contacts ATP.

This sequence belongs to the adenylate kinase family. As to quaternary structure, monomer.

The protein resides in the cytoplasm. It carries out the reaction AMP + ATP = 2 ADP. The protein operates within purine metabolism; AMP biosynthesis via salvage pathway; AMP from ADP: step 1/1. Its function is as follows. Catalyzes the reversible transfer of the terminal phosphate group between ATP and AMP. Plays an important role in cellular energy homeostasis and in adenine nucleotide metabolism. The protein is Adenylate kinase of Zymomonas mobilis subsp. mobilis (strain ATCC 31821 / ZM4 / CP4).